Here is a 183-residue protein sequence, read N- to C-terminus: Putative 3-methyladenine DNA glycosylase (183 aa).

This sequence belongs to the DNA glycosylase MPG family.

This is Putative 3-methyladenine DNA glycosylase from Legionella pneumophila subsp. pneumophila (strain Philadelphia 1 / ATCC 33152 / DSM 7513).